Reading from the N-terminus, the 265-residue chain is Small ribosomal subunit protein uS2 (265 aa).

Residues 226 to 265 (AAAPNSASVREEEFSAESADEGKGRRAPAKKGDKKADAAE) form a disordered region. A compositionally biased stretch (basic and acidic residues) spans 245-265 (DEGKGRRAPAKKGDKKADAAE).

It belongs to the universal ribosomal protein uS2 family.

The protein is Small ribosomal subunit protein uS2 of Xanthomonas euvesicatoria pv. vesicatoria (strain 85-10) (Xanthomonas campestris pv. vesicatoria).